A 133-amino-acid chain; its full sequence is Large ribosomal subunit protein eL14 (133 aa).

The protein belongs to the eukaryotic ribosomal protein eL14 family.

The chain is Large ribosomal subunit protein eL14 (RPL14) from Griffithsia japonica (Red alga).